A 629-amino-acid chain; its full sequence is Chaperone protein HtpG (629 aa).

Residues 1-335 (MSEVETSVEK…TADLPLNVSR (335 aa)) are a; substrate-binding. Positions 336–551 (EMIQESPLLA…EQGPDRQLQK (216 aa)) are b. The segment at 552 to 629 (MLQDAGRIEG…SRVFGRALKE (78 aa)) is c.

The protein belongs to the heat shock protein 90 family. In terms of assembly, homodimer.

The protein resides in the cytoplasm. Its function is as follows. Molecular chaperone. Has ATPase activity. The sequence is that of Chaperone protein HtpG from Rhizobium meliloti (strain 1021) (Ensifer meliloti).